A 1372-amino-acid chain; its full sequence is Collagen alpha-2(I) chain (1372 aa).

An N-terminal signal peptide occupies residues 1 to 22 (MLSFVDTRTLLLLAVTSCLATC). Residue Gln-23 is modified to Pyrrolidone carboxylic acid. A propeptide spans 23-85 (QSLQMGSVRK…PPGLTGNFAA (63 aa)) (N-terminal propeptide). Residues 28-1135 (GSVRKGPTGD…DQPRSQPSLR (1108 aa)) are disordered. Pro residues predominate over residues 59-77 (VGPPGPPGAPGPPGPPGPP). Gln-86 is subject to Pyrrolidone carboxylic acid. At Lys-90 the chain carries Allysine. The span at 95 to 146 (GPGPMGLMGPRGPPGAVGAPGPQGFQGPAGEPGEPGQTGPAGSRGPAGPPGK) shows a compositional bias: low complexity. Positions 147 to 161 (AGEDGHPGKPGRPGE) are enriched in basic and acidic residues. Lys-183 carries the post-translational modification 5-hydroxylysine; alternate. The O-linked (Gal...) hydroxylysine; alternate glycan is linked to Lys-183. Low complexity-rich tracts occupy residues 231-260 (VGAPGPAGARGSDGSVGPVGPAGPIGSAGP), 285-299 (AGPRGEAGLPGLSGP), 306-327 (PGANGLTGAKGATGLPGVAGAP), 336-348 (PGPVGAAGATGPR), 390-416 (PGEPGSAGPAGPPGLRGSPGSRGLPGA), 476-495 (LPGIDGRPGPIGPAGPRGEA), and 519-537 (PGLAGARGAPGPDGNNGAQ). Gly residues predominate over residues 544 to 553 (GVQGGKGEQG). The span at 600-639 (PGESGAAGPSGPIGIRGPSGAPGPDGNKGEAGAVGAPGSA) shows a compositional bias: low complexity. Residues 640–649 (GASGPGGLPG) show a composition bias toward gly residues. Low complexity-rich tracts occupy residues 674 to 716 (NPGR…PRGS) and 725 to 743 (PAGPNGFAGPAGSAGQPGA). Positions 744–753 (KGEKGTKGPK) are enriched in basic and acidic residues. The span at 755-771 (ENGIVGPTGPVGAAGPS) shows a compositional bias: low complexity. Residues 781–790 (GSRGDGGPPG) are compositionally biased toward gly residues. The Cell attachment site signature appears at 783–785 (RGD). A compositionally biased stretch (low complexity) spans 792–801 (TGFPGAAGRT). Positions 828–830 (RGD) match the Cell attachment site motif. Low complexity-rich tracts occupy residues 855–882 (SGEPGTTGPPGTAGPQGLLGAPGILGLP), 891–927 (PGIAGALGEPGPLGIAGPPGARGPPGAVGSPGVNGAP), 957–978 (PGNIGPTGAAGAPGPHGSVGPA), and 987–1007 (PGPAGSVGPVGAVGPRGPSGP). The short motif at 1011–1013 (RGD) is the Cell attachment site element. The span at 1011–1022 (RGDKGEPGDKGA) shows a compositional bias: basic and acidic residues. Residues 1095–1107 (AGPPGPPGPPGPP) are compositionally biased toward pro residues. Over residues 1108 to 1120 (GVSGGGYDFGFEG) the composition is skewed to gly residues. Positions 1126 to 1372 (DQPRSQPSLR…RVEVGPVCFK (247 aa)) are cleaved as a propeptide — C-terminal propeptide. The region spanning 1139–1372 (YEVDATLKSL…RVEVGPVCFK (234 aa)) is the Fibrillar collagen NC1 domain. 3 cysteine pairs are disulfide-bonded: Cys-1169-Cys-1201, Cys-1209-Cys-1370, and Cys-1278-Cys-1323. Ca(2+)-binding residues include Asp-1187, Asn-1189, Gln-1190, Cys-1192, and Asp-1195. A glycan (N-linked (GlcNAc...) asparagine) is linked at Asn-1273.

This sequence belongs to the fibrillar collagen family. In terms of assembly, trimers of one alpha 2(I) and two alpha 1(I) chains. Interacts (via C-terminus) with TMEM131 (via PapD-L domain); the interaction is direct and is involved in assembly and TRAPPIII ER-to-Golgi transport complex-dependent secretion of collagen. Proline residues at the third position of the tripeptide repeating unit (G-X-P) are hydroxylated in some or all of the chains. Proline residues at the second position of the tripeptide repeating unit (G-P-X) are hydroxylated in some of the chains. As to expression, forms the fibrils of tendon, ligaments and bones. In bones the fibrils are mineralized with calcium hydroxyapatite. Expressed in flagella of epididymal sperm.

Its subcellular location is the secreted. It localises to the extracellular space. The protein resides in the extracellular matrix. Its function is as follows. Type I collagen is a member of group I collagen (fibrillar forming collagen). In Rattus norvegicus (Rat), this protein is Collagen alpha-2(I) chain (Col1a2).